The chain runs to 465 residues: UDP-N-acetylmuramate--L-alanine ligase (465 aa).

112–118 (GTHGKTT) contacts ATP.

This sequence belongs to the MurCDEF family.

Its subcellular location is the cytoplasm. It catalyses the reaction UDP-N-acetyl-alpha-D-muramate + L-alanine + ATP = UDP-N-acetyl-alpha-D-muramoyl-L-alanine + ADP + phosphate + H(+). The protein operates within cell wall biogenesis; peptidoglycan biosynthesis. Cell wall formation. The sequence is that of UDP-N-acetylmuramate--L-alanine ligase from Burkholderia mallei (strain NCTC 10247).